The sequence spans 506 residues: ATP synthase subunit alpha, chloroplastic (506 aa).

170–177 lines the ATP pocket; sequence GDRQTGKT.

It belongs to the ATPase alpha/beta chains family. In terms of assembly, F-type ATPases have 2 components, CF(1) - the catalytic core - and CF(0) - the membrane proton channel. CF(1) has five subunits: alpha(3), beta(3), gamma(1), delta(1), epsilon(1). CF(0) has four main subunits: a, b, b' and c.

The protein localises to the plastid. The protein resides in the chloroplast thylakoid membrane. The enzyme catalyses ATP + H2O + 4 H(+)(in) = ADP + phosphate + 5 H(+)(out). Produces ATP from ADP in the presence of a proton gradient across the membrane. The alpha chain is a regulatory subunit. This chain is ATP synthase subunit alpha, chloroplastic, found in Euglena gracilis.